The sequence spans 98 residues: Large ribosomal subunit protein uL23 (98 aa).

It belongs to the universal ribosomal protein uL23 family. Part of the 50S ribosomal subunit. Contacts protein L29, and trigger factor when it is bound to the ribosome.

In terms of biological role, one of the early assembly proteins it binds 23S rRNA. One of the proteins that surrounds the polypeptide exit tunnel on the outside of the ribosome. Forms the main docking site for trigger factor binding to the ribosome. This Chromohalobacter salexigens (strain ATCC BAA-138 / DSM 3043 / CIP 106854 / NCIMB 13768 / 1H11) protein is Large ribosomal subunit protein uL23.